The primary structure comprises 412 residues: LL-diaminopimelate aminotransferase (412 aa).

2 residues coordinate substrate: tyrosine 15 and glycine 42. Residues tyrosine 72, 108-109 (SK), tyrosine 132, asparagine 187, tyrosine 218, and 246-248 (SFS) contribute to the pyridoxal 5'-phosphate site. 3 residues coordinate substrate: lysine 109, tyrosine 132, and asparagine 187. At lysine 249 the chain carries N6-(pyridoxal phosphate)lysine. Residues arginine 257 and asparagine 292 each coordinate pyridoxal 5'-phosphate. Asparagine 292 and arginine 388 together coordinate substrate.

The protein belongs to the class-I pyridoxal-phosphate-dependent aminotransferase family. LL-diaminopimelate aminotransferase subfamily. As to quaternary structure, homodimer. It depends on pyridoxal 5'-phosphate as a cofactor.

It carries out the reaction (2S,6S)-2,6-diaminopimelate + 2-oxoglutarate = (S)-2,3,4,5-tetrahydrodipicolinate + L-glutamate + H2O + H(+). It participates in amino-acid biosynthesis; L-lysine biosynthesis via DAP pathway; LL-2,6-diaminopimelate from (S)-tetrahydrodipicolinate (aminotransferase route): step 1/1. Involved in the synthesis of meso-diaminopimelate (m-DAP or DL-DAP), required for both lysine and peptidoglycan biosynthesis. Catalyzes the direct conversion of tetrahydrodipicolinate to LL-diaminopimelate. The polypeptide is LL-diaminopimelate aminotransferase (Synechocystis sp. (strain ATCC 27184 / PCC 6803 / Kazusa)).